The following is a 315-amino-acid chain: Cytochrome c biogenesis protein CcsA (315 aa).

8 helical membrane-spanning segments follow: residues Ser-15–Gly-35, Phe-39–Ile-59, Leu-73–Val-93, Thr-97–Phe-117, Val-144–Val-164, Thr-222–Asn-242, Trp-257–Trp-277, and Ala-283–Leu-303.

This sequence belongs to the CcmF/CycK/Ccl1/NrfE/CcsA family. In terms of assembly, may interact with Ccs1.

The protein localises to the plastid. It is found in the chloroplast thylakoid membrane. Its function is as follows. Required during biogenesis of c-type cytochromes (cytochrome c6 and cytochrome f) at the step of heme attachment. The sequence is that of Cytochrome c biogenesis protein CcsA from Chlorella vulgaris (Green alga).